The following is a 129-amino-acid chain: Small ribosomal subunit protein uS11 (129 aa).

This sequence belongs to the universal ribosomal protein uS11 family. In terms of assembly, part of the 30S ribosomal subunit. Interacts with proteins S7 and S18. Binds to IF-3.

In terms of biological role, located on the platform of the 30S subunit, it bridges several disparate RNA helices of the 16S rRNA. Forms part of the Shine-Dalgarno cleft in the 70S ribosome. In Geobacillus kaustophilus (strain HTA426), this protein is Small ribosomal subunit protein uS11.